A 204-amino-acid polypeptide reads, in one-letter code: Large ribosomal subunit protein eL15 (204 aa).

Belongs to the eukaryotic ribosomal protein eL15 family. As to quaternary structure, component of the large ribosomal subunit.

The protein localises to the cytoplasm. Component of the large ribosomal subunit. The ribosome is a large ribonucleoprotein complex responsible for the synthesis of proteins in the cell. The polypeptide is Large ribosomal subunit protein eL15 (rpl15) (Tachysurus fulvidraco (Yellow catfish)).